The sequence spans 371 residues: 3-isopropylmalate dehydrogenase (371 aa).

4 residues coordinate substrate: Arg-104, Arg-114, Arg-142, and Asp-232. Residues Asp-232, Asp-256, and Asp-260 each coordinate Mg(2+). 290–302 (GSAPDIAGQDKAN) contributes to the NAD(+) binding site.

Belongs to the isocitrate and isopropylmalate dehydrogenases family. LeuB type 1 subfamily. Homodimer. Requires Mg(2+) as cofactor. Mn(2+) is required as a cofactor.

It localises to the cytoplasm. It catalyses the reaction (2R,3S)-3-isopropylmalate + NAD(+) = 4-methyl-2-oxopentanoate + CO2 + NADH. Its pathway is amino-acid biosynthesis; L-leucine biosynthesis; L-leucine from 3-methyl-2-oxobutanoate: step 3/4. Its function is as follows. Catalyzes the oxidation of 3-carboxy-2-hydroxy-4-methylpentanoate (3-isopropylmalate) to 3-carboxy-4-methyl-2-oxopentanoate. The product decarboxylates to 4-methyl-2 oxopentanoate. The protein is 3-isopropylmalate dehydrogenase of Synechococcus sp. (strain JA-2-3B'a(2-13)) (Cyanobacteria bacterium Yellowstone B-Prime).